A 230-amino-acid chain; its full sequence is Endonuclease NucS (230 aa).

It belongs to the NucS endonuclease family.

The protein localises to the cytoplasm. Functionally, cleaves both 3' and 5' ssDNA extremities of branched DNA structures. In Corynebacterium glutamicum (strain ATCC 13032 / DSM 20300 / JCM 1318 / BCRC 11384 / CCUG 27702 / LMG 3730 / NBRC 12168 / NCIMB 10025 / NRRL B-2784 / 534), this protein is Endonuclease NucS.